Reading from the N-terminus, the 171-residue chain is Inosine/xanthosine triphosphatase (171 aa).

8 to 13 (TTNPAK) is a substrate binding site. Residue glutamate 38 coordinates Mg(2+).

The protein belongs to the YjjX NTPase family. As to quaternary structure, homodimer. The cofactor is Mg(2+). Mn(2+) is required as a cofactor.

The catalysed reaction is XTP + H2O = XDP + phosphate + H(+). The enzyme catalyses ITP + H2O = IDP + phosphate + H(+). Functionally, phosphatase that hydrolyzes non-canonical purine nucleotides such as XTP and ITP to their respective diphosphate derivatives. Probably excludes non-canonical purines from DNA/RNA precursor pool, thus preventing their incorporation into DNA/RNA and avoiding chromosomal lesions. The protein is Inosine/xanthosine triphosphatase of Klebsiella pneumoniae (strain 342).